Here is a 570-residue protein sequence, read N- to C-terminus: Eukaryotic translation initiation factor 2A (570 aa).

WD repeat units lie at residues 274-316 (EKKG…FDTI) and 318-358 (GPRN…EIIS). Residues 468–526 (PPHLRKPLGGGGSAGPPSAAAPTPGNQNQRPAQPRANGNGNAPQPFRPQQSEQERKAFQ) form a disordered region. A compositionally biased stretch (low complexity) spans 482–492 (GPPSAAAPTPG). Positions 493–518 (NQNQRPAQPRANGNGNAPQPFRPQQS) are enriched in polar residues. Residues 519–541 (EQERKAFQLKKKVEEIKVLKQRV) adopt a coiled-coil conformation.

The protein belongs to the WD repeat EIF2A family.

Functions in the early steps of protein synthesis of a small number of specific mRNAs. Acts by directing the binding of methionyl-tRNAi to 40S ribosomal subunits. In contrast to the eIF-2 complex, it binds methionyl-tRNAi to 40S subunits in a codon-dependent manner, whereas the eIF-2 complex binds methionyl-tRNAi to 40S subunits in a GTP-dependent manner. The chain is Eukaryotic translation initiation factor 2A from Caenorhabditis elegans.